The following is a 591-amino-acid chain: Potassium channel KAT4 (591 aa).

At 1–32 the chain is on the cytoplasmic side; sequence MAARSELLRPAFGEASPSLGRFVINPHSCSYR. Residues 33–53 form a helical membrane-spanning segment; the sequence is WWHMFLIMLVLYSAWASPFEL. The Extracellular segment spans residues 54–63; it reads SMEKAASIAL. Residues 64–84 traverse the membrane as a helical segment; sequence VVTDLVVDVFFAIDIALSFFV. The Cytoplasmic portion of the chain corresponds to 85 to 109; sequence AYRDTSTGLLITDRRKITMRYLKRP. The helical transmembrane segment at 110–130 threads the bilayer; the sequence is CFALDVASTIPLQIIYQLVTG. The Extracellular portion of the chain corresponds to 131-137; it reads KRQGLWG. Residues 138-158 traverse the membrane as a helical; Voltage-sensor segment; that stretch reads LLNLLRLWRLRRVSKLFARVE. Residues 159–172 are Cytoplasmic-facing; the sequence is KDIRFNYLWTRLIK. Residues 173-193 traverse the membrane as a helical segment; it reads LLCVTLFALHFAACIYLWMAF. Residues 194–220 are Extracellular-facing; it reads NYKIKELTWIGSQIHSFEDRSVWFCYT. The segment at residues 221-240 is an intramembrane region (pore-forming); sequence CAVYWSITTLATVGYGDLHA. Topologically, residues 241–246 are extracellular; it reads TNIGEM. Residues 247 to 267 form a helical membrane-spanning segment; that stretch reads LFSIAFMLFNMGLTSYIIGNI. Residues 268 to 591 are Cytoplasmic-facing; sequence TNLVVRETSN…IRDGDHLLFS (324 aa). 349-469 serves as a coordination point for a nucleoside 3',5'-cyclic phosphate; that stretch reads LFQGVSDSLI…YIVFSNFIQY (121 aa). The 71-residue stretch at 521-591 folds into the KHA domain; it reads RVVIHEQLPN…IRDGDHLLFS (71 aa).

Belongs to the potassium channel family. Plant (TC 1.A.1.4) subfamily.

The protein localises to the membrane. Probable inward-rectifying potassium channel. Assuming opened or closed conformations in response to the voltage difference across the membrane, the channel is activated by hyperpolarization. The polypeptide is Potassium channel KAT4 (Oryza sativa subsp. japonica (Rice)).